Reading from the N-terminus, the 776-residue chain is MLPGCIFLMILLILQVKEKVILGVEGQQLVYPKKLPLMQKRDIGHTHDDDIEETYEEELMYEIKLNRKTLVLHLLRSREFLGSNYSETFYSMKGEAFTRHLQIMDHCFYQGSIVHEYDSAASISTCNGLRGFFRVNDQRYLIEPVKYSDEGEHLVFKYNPRVPYVANYSCTELNFTRKTVPGDTESEGDPKMKAIHNEKYIELFIVADDTVYRRNSHPHNKLRNRIWGMVNFVNMIYKTLNIHVTLVGIEIWTHEDKIELHSNIETTLLRFSSWQERILKTRKDFDHVVLLSGKWIYTHVQGISYPAGMCLPYYSTSIIKDLLPDTNIIANRMAHQLGHNLGMQHDEFPCTCPSGKCVMDSDGSIPALKFSKCSQNQYHQYLKDYKPTCMLNIPFPCNFDDFQFCGNKKLDEGEECDCGPPQECTNPCCDAHTCVLKPGFTCAEGECCESCQIKKAGSICRPAEDECDFPEMCTGHSPACPKDQFRVNGFPCKNSEGYCFMGKCPTRRDQCSELFDDEATESHDICYKMNTKGNKFGYCKNKENRFLPCEEKDVRCGKIYCTGGELSYLLGEDKTYHLKDPQQNATVKCKTIFLYHDSTDIGLVASGTKCGDGMVCNNGECLNMEKVYNSTNCPSQCHENPMDDHGLQCHCEEGQAPVAWEETLNVTNVAILIVVLVLVIVGIGVLILLIRYQKCIKLKQVQSPPIETLGVENKGYFGDEQQMRTEPILPEIHFLNQRTPESLESLPTSFSSPHYITLKPASKDSRGIADPNQSAK.

The signal sequence occupies residues 1-23 (MLPGCIFLMILLILQVKEKVILG). Positions 24-176 (VEGQQLVYPK…NYSCTELNFT (153 aa)) are excised as a propeptide. Residues 26–669 (GQQLVYPKKL…WEETLNVTNV (644 aa)) are Extracellular-facing. N-linked (GlcNAc...) asparagine glycosylation is found at N84, N167, and N174. The 196-residue stretch at 199–394 (KYIELFIVAD…YKPTCMLNIP (196 aa)) folds into the Peptidase M12B domain. 4 disulfide bridges follow: C310-C389, C350-C373, C352-C357, and C460-C480. The Disintegrin domain occupies 402 to 488 (FQFCGNKKLD…ACPKDQFRVN (87 aa)). Residues N584, N629, and N665 are each glycosylated (N-linked (GlcNAc...) asparagine). A helical transmembrane segment spans residues 670-690 (AILIVVLVLVIVGIGVLILLI). The Cytoplasmic segment spans residues 691–776 (RYQKCIKLKQ…GIADPNQSAK (86 aa)). Residues 757–776 (TLKPASKDSRGIADPNQSAK) are disordered.

In terms of assembly, interacts with ITM2B in sperm; the interaction increases following capacitation. Interacts with HSPA5 and CANX.

It is found in the membrane. Required for normal male fertility via maintenance of epithelial cell morphology in the caput epididymis and subsequently correct epididymis lumen structure required for sperm development. Plays a role in sperm motility, flagella morphology and tyrosine phosphorylation during sperm capacitance. Plays a role in normal expression levels of HSPA5, ITM2B and ADAM2 in sperm both prior to and post-capacitation. This is a non catalytic metalloprotease-like protein. This chain is Disintegrin and metalloproteinase domain-containing protein 7 (ADAM7), found in Macaca fascicularis (Crab-eating macaque).